The following is a 1275-amino-acid chain: Serine/threonine-protein kinase ULK4 (1275 aa).

A Protein kinase domain is found at 4–280; it reads FILYEEIGRG…WTRLLQHSFW (277 aa). 2 disordered regions span residues 299–350 and 364–392; these read SRNT…KSTL and RPTP…TSPL. Positions 336–348 are enriched in basic and acidic residues; it reads FRLENPTEFRPKS. A compositionally biased stretch (polar residues) spans 364–373; it reads RPTPRTSTAV. HEAT repeat units follow at residues 842 to 880, 926 to 964, 1025 to 1063, 1151 to 1189, and 1213 to 1253; these read LKLC…ILSH, STVV…LLVN, LVEE…NLVA, NRPL…LYGG, and PKEQ…LAPG.

This sequence belongs to the protein kinase superfamily. Ser/Thr protein kinase family. APG1/unc-51/ULK1 subfamily. In terms of tissue distribution, expressed in the brain, mainly in postmitotic neurons, including GABAergic neurons, but not in astrocytes (at protein level).

The catalysed reaction is L-seryl-[protein] + ATP = O-phospho-L-seryl-[protein] + ADP + H(+). The enzyme catalyses L-threonyl-[protein] + ATP = O-phospho-L-threonyl-[protein] + ADP + H(+). May be involved in the remodeling of cytoskeletal components, such as alpha-tubulin, and in this way regulates neurite branching and elongation, as well as cell motility. This is Serine/threonine-protein kinase ULK4 (ULK4) from Homo sapiens (Human).